We begin with the raw amino-acid sequence, 281 residues long: Apulose-4-phosphate transketolase subunit A (281 aa).

It belongs to the transketolase family. Probable heterodimer composed of AptA and AptB. Thiamine diphosphate is required as a cofactor.

The catalysed reaction is apulose 4-phosphate + D-glyceraldehyde 3-phosphate = D-xylulose 5-phosphate + dihydroxyacetone phosphate. It functions in the pathway carbohydrate metabolism. Its function is as follows. Involved in catabolism of D-apiose. Catalyzes the transfer of the glycolaldehyde group from apulose-4-phosphate to D-glyceraldehyde 3-phosphate, generating dihydroxyacetone phosphate and D-xylulose-5-phosphate. This chain is Apulose-4-phosphate transketolase subunit A, found in Phocaeicola vulgatus (strain ATCC 8482 / DSM 1447 / JCM 5826 / CCUG 4940 / NBRC 14291 / NCTC 11154) (Bacteroides vulgatus).